Here is a 96-residue protein sequence, read N- to C-terminus: uncharacterized protein (96 aa).

This is an uncharacterized protein from Enterobacteria phage T4 (Bacteriophage T4).